Here is an 883-residue protein sequence, read N- to C-terminus: Alanine--tRNA ligase (883 aa).

Residues histidine 564, histidine 568, cysteine 666, and histidine 670 each coordinate Zn(2+).

This sequence belongs to the class-II aminoacyl-tRNA synthetase family. Requires Zn(2+) as cofactor.

The protein resides in the cytoplasm. It catalyses the reaction tRNA(Ala) + L-alanine + ATP = L-alanyl-tRNA(Ala) + AMP + diphosphate. Its function is as follows. Catalyzes the attachment of alanine to tRNA(Ala) in a two-step reaction: alanine is first activated by ATP to form Ala-AMP and then transferred to the acceptor end of tRNA(Ala). Also edits incorrectly charged Ser-tRNA(Ala) and Gly-tRNA(Ala) via its editing domain. The protein is Alanine--tRNA ligase of Synechococcus sp. (strain JA-3-3Ab) (Cyanobacteria bacterium Yellowstone A-Prime).